A 99-amino-acid polypeptide reads, in one-letter code: Transcription and mRNA export factor SUS1 (99 aa).

This sequence belongs to the ENY2 family. As to quaternary structure, component of the nuclear pore complex (NPC)-associated TREX-2 complex (transcription and export complex 2), composed of at least SUS1, SAC3, THP1, SEM1, and CDC31. TREX-2 contains 2 SUS1 chains. The TREX-2 complex interacts with the nucleoporin NUP1. Component of the 1.8 MDa SAGA transcription coactivator-HAT complex. SAGA is built of 5 distinct domains with specialized functions. Within the SAGA complex, SUS1, SGF11, SGF73 and UBP8 form an additional subcomplex of SAGA called the DUB module (deubiquitination module). Interacts directly with THP1, SAC3, SGF11, and with the RNA polymerase II.

It is found in the nucleus. The protein localises to the nucleoplasm. It localises to the cytoplasm. Its subcellular location is the P-body. Functionally, involved in mRNA export coupled transcription activation by association with both the TREX-2 and the SAGA complexes. At the promoters, SAGA is required for recruitment of the basal transcription machinery. It influences RNA polymerase II transcriptional activity through different activities such as TBP interaction and promoter selectivity, interaction with transcription activators, and chromatin modification through histone acetylation and deubiquitination. Within the SAGA complex, participates in a subcomplex required for deubiquitination of H2B and for the maintenance of steady-state H3 methylation levels. The TREX-2 complex functions in docking export-competent ribonucleoprotein particles (mRNPs) to the nuclear entrance of the nuclear pore complex (nuclear basket). TREX-2 participates in mRNA export and accurate chromatin positioning in the nucleus by tethering genes to the nuclear periphery. May also be involved in cytoplasmic mRNA decay by interaction with components of P-bodies. The sequence is that of Transcription and mRNA export factor SUS1 from Eremothecium gossypii (strain ATCC 10895 / CBS 109.51 / FGSC 9923 / NRRL Y-1056) (Yeast).